The following is a 308-amino-acid chain: tRNA pseudouridine synthase B (308 aa).

Aspartate 37 functions as the Nucleophile in the catalytic mechanism.

This sequence belongs to the pseudouridine synthase TruB family. Type 1 subfamily.

It catalyses the reaction uridine(55) in tRNA = pseudouridine(55) in tRNA. Functionally, responsible for synthesis of pseudouridine from uracil-55 in the psi GC loop of transfer RNAs. This Deinococcus radiodurans (strain ATCC 13939 / DSM 20539 / JCM 16871 / CCUG 27074 / LMG 4051 / NBRC 15346 / NCIMB 9279 / VKM B-1422 / R1) protein is tRNA pseudouridine synthase B.